The chain runs to 231 residues: eRF1 methyltransferase catalytic subunit mtq2 (231 aa).

S-adenosyl-L-methionine-binding positions include 54–58 (GCGSG), Asp-80, and Asn-130. A substrate-binding site is contributed by 130–133 (NPPY).

The protein belongs to the eukaryotic/archaeal PrmC-related family. In terms of assembly, heterodimer of mtq2-trm112. mtq2 is the catalytic subunit carrying the catalytic and the S-adenosyl L-methionine binding sites.

Its subcellular location is the cytoplasm. The protein resides in the nucleus. The enzyme catalyses L-glutaminyl-[peptide chain release factor] + S-adenosyl-L-methionine = N(5)-methyl-L-glutaminyl-[peptide chain release factor] + S-adenosyl-L-homocysteine + H(+). Its function is as follows. Methylates eRF1 on 'Gln-182' using S-adenosyl L-methionine as methyl donor. eRF1 needs to be complexed to eRF3 in its GTP-bound form to be efficiently methylated. The protein is eRF1 methyltransferase catalytic subunit mtq2 (mtq2) of Schizosaccharomyces pombe (strain 972 / ATCC 24843) (Fission yeast).